A 369-amino-acid chain; its full sequence is Cytokine receptor common subunit gamma (369 aa).

Residues 1-22 (MLKLLLSPRSFLVLQLLLLRAG) form the signal peptide. Topologically, residues 23 to 263 (WSSKVLMSSA…ENPSLFALEA (241 aa)) are extracellular. Cys-62 and Cys-72 are joined by a disulfide. N-linked (GlcNAc...) asparagine glycosylation is found at Asn-71, Asn-75, Asn-84, and Asn-96. Cys-102 and Cys-115 are disulfide-bonded. Positions 156–254 (APENLTLSNL…VHWGSHTVEE (99 aa)) constitute a Fibronectin type-III domain. N-linked (GlcNAc...) asparagine glycans are attached at residues Asn-159 and Asn-164. The WSXWS motif signature appears at 238 to 242 (WSKWS). A helical membrane pass occupies residues 264-284 (VLIPVGTMGLIITLIFVYCWL). Residues 285–369 (ERMPPIPPIK…PPCYSLKPEA (85 aa)) are Cytoplasmic-facing. A Box 1 motif motif is present at residues 286 to 294 (RMPPIPPIK).

It belongs to the type I cytokine receptor family. Type 5 subfamily. The gamma subunit is common to the IL2, IL4, IL7, IL15, IL21 and probably also the IL13 receptors. Interacts with SHB upon interleukin stimulation. Interacts with IL9.

It localises to the cell membrane. The protein resides in the cell surface. In terms of biological role, common subunit for the receptors for a variety of interleukins. Probably in association with IL15RA, involved in the stimulation of neutrophil phagocytosis by IL15. The polypeptide is Cytokine receptor common subunit gamma (Il2rg) (Mus musculus (Mouse)).